We begin with the raw amino-acid sequence, 591 residues long: NADP-dependent malic enzyme (591 aa).

Y139 acts as the Proton donor in catalysis. Residue R192 coordinates NAD(+). K210 functions as the Proton acceptor in the catalytic mechanism. 3 residues coordinate a divalent metal cation: E282, D283, and D306. NAD(+) is bound at residue D306. Residue 335-351 (LFLGAGEAGTGIAELIA) participates in NADP(+) binding. N447 is an NAD(+) binding site.

Belongs to the malic enzymes family. Homotetramer. Requires Mg(2+) as cofactor. Mn(2+) serves as cofactor.

Its subcellular location is the cytoplasm. It carries out the reaction (S)-malate + NADP(+) = pyruvate + CO2 + NADPH. The enzyme catalyses oxaloacetate + H(+) = pyruvate + CO2. This Vitis vinifera (Grape) protein is NADP-dependent malic enzyme.